The primary structure comprises 479 residues: MSPQTETKASVGFKAGVKEYKLTYYTPEYETKDTDILAAFRVTPQPGVPPEEAGAAVAAESSTGTWTTVWTDGLTSLDRYKGRCYHIEPVPGEETQFIAYVAYPLDLFEEGSVTNMFTSIVGNVFGFKALAALRLEDLRIPPAYTKTFQGPPHGIQVERDKLNKYGRPLLGCTIKPKLGLSAKNYGRAVYECLRGGLDFTKDDENVNSQPFMRWRDRFLFCAEAIYKSQAETGEIKGHYLNATAGTCEEMIKRAVFARELGVRIVMHDYLTGGFTANTSLAHYCRDNGLLLHIHRAMHAVIDRQKNHGMHFRVLAKALRLSGGDHIHAGTVVGKLEGDRESTLGFVDLLRDDYVEKDRSRGIFFTQDWVSLPGVLPVASGGIHVWHMPALTEIFGDDSVLQFGGGTLGHPWGNAPGAVANRVALEACVQARNEGRDLAIEGNEIIREACKWSPELAAACEVWKEIRFNFPTIDKLDGQA.

The propeptide occupies 1–2 (MS). 2 residues coordinate substrate: asparagine 123 and threonine 173. Residue lysine 175 is the Proton acceptor of the active site. Lysine 177 serves as a coordination point for substrate. Positions 201, 203, and 204 each coordinate Mg(2+). Lysine 201 is modified (N6-carboxylysine). Serine 208 carries the phosphoserine modification. Histidine 294 functions as the Proton acceptor in the catalytic mechanism. Arginine 295 and histidine 327 together coordinate substrate. Residue threonine 330 is modified to Phosphothreonine. Serine 379 lines the substrate pocket.

Belongs to the RuBisCO large chain family. Type I subfamily. In terms of assembly, heterohexadecamer of 8 large chains and 8 small chains; disulfide-linked. The disulfide link is formed within the large subunit homodimers. Mg(2+) serves as cofactor. Post-translationally, the disulfide bond which can form in the large chain dimeric partners within the hexadecamer appears to be associated with oxidative stress and protein turnover.

The protein localises to the plastid. It localises to the chloroplast. It catalyses the reaction 2 (2R)-3-phosphoglycerate + 2 H(+) = D-ribulose 1,5-bisphosphate + CO2 + H2O. It carries out the reaction D-ribulose 1,5-bisphosphate + O2 = 2-phosphoglycolate + (2R)-3-phosphoglycerate + 2 H(+). Functionally, ruBisCO catalyzes two reactions: the carboxylation of D-ribulose 1,5-bisphosphate, the primary event in carbon dioxide fixation, as well as the oxidative fragmentation of the pentose substrate in the photorespiration process. Both reactions occur simultaneously and in competition at the same active site. In Barbarea verna (Land cress), this protein is Ribulose bisphosphate carboxylase large chain.